Consider the following 179-residue polypeptide: tRNA (cytidine(56)-2'-O)-methyltransferase (179 aa).

Leu84 contributes to the S-adenosyl-L-methionine binding site.

This sequence belongs to the aTrm56 family. As to quaternary structure, homodimer.

The protein resides in the cytoplasm. It carries out the reaction cytidine(56) in tRNA + S-adenosyl-L-methionine = 2'-O-methylcytidine(56) in tRNA + S-adenosyl-L-homocysteine + H(+). Its function is as follows. Specifically catalyzes the AdoMet-dependent 2'-O-ribose methylation of cytidine at position 56 in tRNAs. The sequence is that of tRNA (cytidine(56)-2'-O)-methyltransferase from Methanothermobacter thermautotrophicus (strain ATCC 29096 / DSM 1053 / JCM 10044 / NBRC 100330 / Delta H) (Methanobacterium thermoautotrophicum).